The sequence spans 962 residues: MEQMFVHIWVSLVVLMSVWSAQSDKKQDVPVIDVLGLEDVKQTVAAVEKLSLALKTLSDVYVMSTFRLPPKLGGVLLGLYNKQDNKKYLEVAIMSKINKVLVRYVREDGKLHTVNMQSPNVADGRPQSLILRVGGLRREYLSLELYVNCRLADSAQRLPPLVDLPRDAELVEIRNGHKAYARMQGSMDTLKLALGGTVAQAGALTDCPFQGDASSYNIVNGEVNSILGDHTKALIGQLIIFNQILGELREDIREQVKEMSLVRNAILECQMCGFHEPRSRCQPNPCFKGVSCMETFEYPGYRCGPCPDGMTGNGTHCQDIDECSEAQPCYTPGACVNTARGFTCESCPPGMWGPPLSGVGVEYAKSHRQECSDIDECVDLANACTPNSVCINIIGSFRCGQCKTGYVGNQTAGCFPRKSCSSLSFNPCDANAHCVMQRNGDVSCACNVGWAGNGHTCGKDTDIDGYPDRSLPCMDNHKHCRQDNCVYTPNSGQEDADNDGIGDQCDEDADGDGIKNVEDNCRLVSNKDQQNSDTDSFGDACDNCPTVPNIDQKDTDSNGEGDACDDDIDGDGIQNVLDNCPKVPNPMQTDRDRDGVGDACDSCPEISNPMQTDVDNDLVGDVCDTNQDTDGDGHQDTRDNCPDIPNSSQLDSDNDGIGDDCDEDDDNDGIPDNHAINGIGPDNCRLISNPNQKDSDSNGVGDVCENDFDNDSVMDLVDVCPESAEVTLTDFRAYQTVILDPEGDAQIDPNWVVLNQGMEIVQTMNSDPGLAVGYTAFNGVDFEGTFHVNTVTDDDCAGSIFGYQDSSSFYVVMWKQTEQTYWQSIPFRAMAEPGLQLKAVKSRTGPGEFLRNALWHAGDTDGEVKLLWKDPRNVGWLDKTSYRWQLSHRPQVGYIRVKLYEGSEMVADSDVVIDTSMRGGRLGVFCFSQENIIWSNLRYRCNDTVPEDFSSHRKQVLMHIKV.

Positions 1 to 23 are cleaved as a signal peptide; the sequence is MEQMFVHIWVSLVVLMSVWSAQS. One can recognise a Laminin G-like domain in the interval 24-196; sequence DKKQDVPVID…MDTLKLALGG (173 aa). Residues 277–318 form the EGF-like 1 domain; that stretch reads PRSRCQPNPCFKGVSCMETFEYPGYRCGPCPDGMTGNGTHCQ. Cystine bridges form between C281/C292, C286/C303, C306/C317, C323/C335, C329/C344, C347/C371, C377/C390, C384/C399, C402/C414, C420/C434, C428/C444, C446/C457, C473/C480, C485/C505, C521/C541, C544/C564, C580/C600, C603/C623, C641/C661, and C684/C704. N-linked (GlcNAc...) asparagine glycosylation is present at N313. The EGF-like 2; calcium-binding domain maps to 319 to 358; sequence DIDECSEAQPCYTPGACVNTARGFTCESCPPGMWGPPLSG. The 40-residue stretch at 373 to 412 folds into the EGF-like 3; calcium-binding domain; that stretch reads DIDECVDLANACTPNSVCINIIGSFRCGQCKTGYVGNQTA. The N-linked (GlcNAc...) asparagine glycan is linked to N409. Residues 416-458 form the EGF-like 4 domain; sequence PRKSCSSLSFNPCDANAHCVMQRNGDVSCACNVGWAGNGHTCG. TSP type-3 repeat units lie at residues 459–493, 494–529, 530–552, 553–588, 589–611, 612–649, 650–692, and 693–728; these read KDTD…NSGQ, EDAD…NKDQ, QNSD…NIDQ, KDTD…NPMQ, TDRD…NPMQ, TDVD…NSSQ, LDSD…NPNQ, and KDSD…EVTL. The tract at residues 548-704 is disordered; it reads PNIDQKDTDS…SDSNGVGDVC (157 aa). Residues 557-570 are compositionally biased toward acidic residues; sequence SNGEGDACDDDIDG. The span at 631–641 shows a compositional bias: basic and acidic residues; sequence GDGHQDTRDNC. N-linked (GlcNAc...) asparagine glycosylation occurs at N646. The segment covering 652–669 has biased composition (acidic residues); sequence SDNDGIGDDCDEDDDNDG. N-linked (GlcNAc...) asparagine glycosylation occurs at N710. C720 and C941 are disulfide-bonded. Residues 732-946 enclose the TSP C-terminal domain; it reads RAYQTVILDP…LRYRCNDTVP (215 aa). N-linked (GlcNAc...) asparagine glycosylation occurs at N942.

It belongs to the thrombospondin family. Oligomer; disulfide-linked.

Its function is as follows. Adhesive glycoprotein that mediates cell-to-cell and cell-to-matrix interactions. Can bind to fibrinogen, fibronectin, laminin and type V collagen. This is Thrombospondin-3a (thbs3a) from Danio rerio (Zebrafish).